The sequence spans 405 residues: Imidazolonepropionase (405 aa).

Fe(3+)-binding residues include His-72 and His-74. Positions 72 and 74 each coordinate Zn(2+). 4-imidazolone-5-propanoate contacts are provided by Arg-81, Tyr-144, and His-177. Tyr-144 lines the N-formimidoyl-L-glutamate pocket. Residue His-242 participates in Fe(3+) binding. Position 242 (His-242) interacts with Zn(2+). Residue Gln-245 coordinates 4-imidazolone-5-propanoate. Asp-317 is a binding site for Fe(3+). Asp-317 is a Zn(2+) binding site. The N-formimidoyl-L-glutamate site is built by Asn-319 and Gly-321. Thr-322 is a 4-imidazolone-5-propanoate binding site.

Belongs to the metallo-dependent hydrolases superfamily. HutI family. It depends on Zn(2+) as a cofactor. The cofactor is Fe(3+).

The protein resides in the cytoplasm. The catalysed reaction is 4-imidazolone-5-propanoate + H2O = N-formimidoyl-L-glutamate. The protein operates within amino-acid degradation; L-histidine degradation into L-glutamate; N-formimidoyl-L-glutamate from L-histidine: step 3/3. In terms of biological role, catalyzes the hydrolytic cleavage of the carbon-nitrogen bond in imidazolone-5-propanoate to yield N-formimidoyl-L-glutamate. It is the third step in the universal histidine degradation pathway. The polypeptide is Imidazolonepropionase (Erwinia tasmaniensis (strain DSM 17950 / CFBP 7177 / CIP 109463 / NCPPB 4357 / Et1/99)).